A 105-amino-acid chain; its full sequence is Iron-sulfur cluster assembly protein CyaY (105 aa).

The protein belongs to the frataxin family.

Involved in iron-sulfur (Fe-S) cluster assembly. May act as a regulator of Fe-S biogenesis. In Chromobacterium violaceum (strain ATCC 12472 / DSM 30191 / JCM 1249 / CCUG 213 / NBRC 12614 / NCIMB 9131 / NCTC 9757 / MK), this protein is Iron-sulfur cluster assembly protein CyaY.